We begin with the raw amino-acid sequence, 386 residues long: Putative gustatory receptor 92a (386 aa).

At Met1–Ser14 the chain is on the cytoplasmic side. A helical transmembrane segment spans residues Thr15 to Leu35. The Extracellular portion of the chain corresponds to His36–Arg79. N-linked (GlcNAc...) asparagine glycosylation is present at Asn54. A helical transmembrane segment spans residues Val80–Leu100. Residues Cys101 to Leu141 are Cytoplasmic-facing. The chain crosses the membrane as a helical span at residues Ile142–Ile162. The Extracellular portion of the chain corresponds to Arg163–Arg169. The helical transmembrane segment at Phe170–Ile190 threads the bilayer. Over Asn191–Leu256 the chain is Cytoplasmic. The helical transmembrane segment at Phe257 to Phe277 threads the bilayer. Residues Asn278–Ser287 are Extracellular-facing. A helical membrane pass occupies residues Phe288–Val308. At Glu309–Asp356 the chain is on the cytoplasmic side. A helical transmembrane segment spans residues Val357–Ala377. Residues Gln378–Gly386 lie on the Extracellular side of the membrane.

It belongs to the insect chemoreceptor superfamily. Gustatory receptor (GR) family. Gr93a subfamily.

The protein localises to the cell membrane. In terms of biological role, probable gustatory receptor which mediates acceptance or avoidance behavior, depending on its substrates. This chain is Putative gustatory receptor 92a (Gr92a), found in Drosophila melanogaster (Fruit fly).